Here is a 202-residue protein sequence, read N- to C-terminus: Orotate phosphoribosyltransferase (202 aa).

5-phospho-alpha-D-ribose 1-diphosphate-binding positions include K93 and 113 to 121; that span reads EDIITTGGS. Orotate contacts are provided by T117 and R145.

The protein belongs to the purine/pyrimidine phosphoribosyltransferase family. PyrE subfamily. Homodimer. The cofactor is Mg(2+).

The enzyme catalyses orotidine 5'-phosphate + diphosphate = orotate + 5-phospho-alpha-D-ribose 1-diphosphate. The protein operates within pyrimidine metabolism; UMP biosynthesis via de novo pathway; UMP from orotate: step 1/2. In terms of biological role, catalyzes the transfer of a ribosyl phosphate group from 5-phosphoribose 1-diphosphate to orotate, leading to the formation of orotidine monophosphate (OMP). In Campylobacter hominis (strain ATCC BAA-381 / DSM 21671 / CCUG 45161 / LMG 19568 / NCTC 13146 / CH001A), this protein is Orotate phosphoribosyltransferase.